A 739-amino-acid polypeptide reads, in one-letter code: Catalase-peroxidase (739 aa).

Positions 99-227 (WHSAGTYRMG…LAAVQMGLIY (129 aa)) form a cross-link, tryptophyl-tyrosyl-methioninium (Trp-Tyr) (with M-253). The active-site Proton acceptor is the His-100. Positions 227 to 253 (YVNPEGPDGNPDPVASGRDVRETFARM) form a cross-link, tryptophyl-tyrosyl-methioninium (Tyr-Met) (with W-99). His-268 is a heme b binding site.

This sequence belongs to the peroxidase family. Peroxidase/catalase subfamily. Homodimer or homotetramer. Requires heme b as cofactor. In terms of processing, formation of the three residue Trp-Tyr-Met cross-link is important for the catalase, but not the peroxidase activity of the enzyme.

The enzyme catalyses H2O2 + AH2 = A + 2 H2O. It carries out the reaction 2 H2O2 = O2 + 2 H2O. Functionally, bifunctional enzyme with both catalase and broad-spectrum peroxidase activity. This is Catalase-peroxidase from Syntrophotalea carbinolica (strain DSM 2380 / NBRC 103641 / GraBd1) (Pelobacter carbinolicus).